An 857-amino-acid chain; its full sequence is Protein argonaute-1 (857 aa).

Positions 227–346 constitute a PAZ domain; that stretch reads PVIEFMCEVL…LPLEVCNIVA (120 aa). Interaction with guide RNA stretches follow at residues 309-314 and 522-564; these read YFKQKY and GKTP…LCLK. Positions 515–816 constitute a Piwi domain; sequence LIIVILPGKT…VAFRARYHLV (302 aa). Positions 670-675 are impairs access of bound RNA to the active site; the sequence is PEGQLP. Interaction with guide RNA regions lie at residues 708–712, 751–759, and 788–813; these read RHHTR, HAGIQGTSR, and YVRCTRSVSIPAPAYYARLVAFRARY.

The protein belongs to the argonaute family. Ago subfamily. Interacts with DDB1, DDX5, DDX6, DHX30, DHX36, DDX47, DICER1, AGO2, ELAVL1, HNRNPF, IGF2BP1, ILF3, IMP8, MATR3, MOV10, PABPC1, PRMT5, RBM4, SART3, TNRC6B, UPF1 and YBX1. Associates with polysomes and messenger ribonucleoproteins (mNRPs). Interacts with LIMD1, WTIP and AJUBA. Interacts with APOBEC3F, APOBEC3G and APOBEC3H. Post-translationally, ubiquitinated on surface-exposed lysines by a SCF-like E3 ubiquitin-protein ligase complex containing ZSWIM8 during target-directed microRNA degradation (TDMD), a process that mediates degradation of microRNAs (miRNAs). Ubiquitination by the SCF-like E3 ubiquitin-protein ligase complex containing ZSWIM8 leads to its subsequent degradation, thereby exposing miRNAs for degradation. ZSWIM8 recognizes and binds AGO1 when it is engaged with a TDMD target.

It is found in the cytoplasm. The protein resides in the P-body. Its function is as follows. Required for RNA-mediated gene silencing (RNAi). Binds to short RNAs such as microRNAs (miRNAs) or short interfering RNAs (siRNAs), and represses the translation of mRNAs which are complementary to them. Lacks endonuclease activity and does not appear to cleave target mRNAs. Also required for transcriptional gene silencing (TGS) of promoter regions which are complementary to bound short antigene RNAs (agRNAs). The sequence is that of Protein argonaute-1 (AGO1) from Homo sapiens (Human).